The primary structure comprises 271 residues: UPF0328 protein ECU09_0020 (271 aa).

Belongs to the UPF0328 family.

In Encephalitozoon cuniculi (strain GB-M1) (Microsporidian parasite), this protein is UPF0328 protein ECU09_0020.